Consider the following 351-residue polypeptide: Signal recognition particle receptor FtsY (351 aa).

GTP-binding positions include 152 to 159 (GVNGSGKT), 235 to 239 (DTAGR), and 299 to 302 (TKMD).

Belongs to the GTP-binding SRP family. FtsY subfamily. In terms of assembly, part of the signal recognition particle protein translocation system, which is composed of SRP and FtsY.

It is found in the cell membrane. The protein resides in the cytoplasm. The catalysed reaction is GTP + H2O = GDP + phosphate + H(+). Involved in targeting and insertion of nascent membrane proteins into the cytoplasmic membrane. Acts as a receptor for the complex formed by the signal recognition particle (SRP) and the ribosome-nascent chain (RNC). This is Signal recognition particle receptor FtsY from Metamycoplasma hominis (strain ATCC 23114 / DSM 25592 / NBRC 14850 / NCTC 10111 / PG21) (Mycoplasma hominis).